Consider the following 93-residue polypeptide: MKVAVAALAVLLCAMALCSQVFSAPFGADTPTACCFSYVARQLSRKIVADYFETSSQCSKPGVIFQTKKGRQVCANPTEDWVQEYITDLELNA.

The N-terminal stretch at Met-1–Ala-24 is a signal peptide. Intrachain disulfides connect Cys-34-Cys-58 and Cys-35-Cys-74.

It belongs to the intercrine beta (chemokine CC) family. As to quaternary structure, self-associates. Also heterodimer of MIP-1-alpha(4-69) and MIP-1-beta(3-69). Interacts with CCR1.

The protein localises to the secreted. Its function is as follows. Monokine with inflammatory and chemokinetic properties. Binds to CCR1, CCR4 and CCR5. One of the major HIV-suppressive factors produced by CD8+ T-cells. Recombinant MIP-1-alpha induces a dose-dependent inhibition of different strains of HIV-1, HIV-2, and simian immunodeficiency virus (SIV). The protein is C-C motif chemokine 3 (CCL3) of Bos taurus (Bovine).